Here is a 120-residue protein sequence, read N- to C-terminus: Large ribosomal subunit protein uL18 (120 aa).

It belongs to the universal ribosomal protein uL18 family. In terms of assembly, part of the 50S ribosomal subunit; part of the 5S rRNA/L5/L18/L25 subcomplex. Contacts the 5S and 23S rRNAs.

Its function is as follows. This is one of the proteins that bind and probably mediate the attachment of the 5S RNA into the large ribosomal subunit, where it forms part of the central protuberance. The chain is Large ribosomal subunit protein uL18 from Bacillus cereus (strain G9842).